A 206-amino-acid polypeptide reads, in one-letter code: tRNA(Phe) 7-((3-amino-3-carboxypropyl)-4-demethylwyosine(37)-N(4))-methyltransferase 2 (206 aa).

The protein belongs to the TYW3 family.

The catalysed reaction is 4-demethyl-7-[(3S)-3-amino-3-carboxypropyl]wyosine(37) in tRNA(Phe) + S-adenosyl-L-methionine = 7-[(3S)-3-amino-3-carboxypropyl]wyosine(37) in tRNA(Phe) + S-adenosyl-L-homocysteine + H(+). In terms of biological role, S-adenosyl-L-methionine-dependent methyltransferase that acts as a component of the wyosine derivatives biosynthesis pathway. Probably methylates N-4 position of wybutosine-86 to produce wybutosine-72. This Pyrococcus abyssi (strain GE5 / Orsay) protein is tRNA(Phe) 7-((3-amino-3-carboxypropyl)-4-demethylwyosine(37)-N(4))-methyltransferase 2.